A 562-amino-acid polypeptide reads, in one-letter code: Protein wntless (562 aa).

The Cytoplasmic portion of the chain corresponds to Met1–Lys13. Residues Leu14–Leu34 form a helical membrane-spanning segment. The Lumenal segment spans residues Tyr35–Gln239. Residues Asn58 and Asn103 are each glycosylated (N-linked (GlcNAc...) asparagine). The chain crosses the membrane as a helical span at residues Val240–Trp260. Residues Arg261–Pro270 are Cytoplasmic-facing. Residues Ala271–Leu291 traverse the membrane as a helical segment. At Glu292–Gln311 the chain is on the lumenal side. A helical transmembrane segment spans residues Gly312 to Ile332. The Cytoplasmic segment spans residues Gln333 to Arg344. Residues Tyr345 to Cys365 traverse the membrane as a helical segment. Topologically, residues Glu366–Ser390 are lumenal. Residues Phe391–Trp411 traverse the membrane as a helical segment. At Lys412–Arg441 the chain is on the cytoplasmic side. A helical transmembrane segment spans residues Phe442 to Met462. The Lumenal segment spans residues Gly463 to Ser482. The chain crosses the membrane as a helical span at residues Ala483 to Tyr503. The Cytoplasmic segment spans residues Ala504 to Asp562. The tract at residues Ser538 to Asp562 is disordered. Residues Asn539–Thr556 show a composition bias toward polar residues.

Belongs to the wntless family. As to quaternary structure, interacts with wg; in the Golgi. Interacts with Vps35, a component of the retromer complex; wls stability is regulated by Vps35.

The protein localises to the presynaptic cell membrane. It is found in the postsynaptic cell membrane. The protein resides in the cell membrane. It localises to the endoplasmic reticulum membrane. Its subcellular location is the endosome membrane. The protein localises to the golgi apparatus membrane. Its function is as follows. A segment polarity gene required for wingless (wg)-dependent patterning processes, acting in both wg-sending cells and wg-target cells. In non-neuronal cells wls directs wg secretion. The wls traffic loop encompasses the Golgi, the cell surface, an endocytic compartment and a retrograde route leading back to the Golgi, and involves clathrin-mediated endocytosis and the retromer complex (a conserved protein complex consisting of Vps35 and Vps26). In neuronal cells (the larval motorneuron NMJ), the wg signal moves across the synapse via the release of wls-containing exosome-like vesicles. Postsynaptic wls is required for the trafficking of fz2 through the fz2-interacting protein Grip. This chain is Protein wntless, found in Drosophila mojavensis (Fruit fly).